The following is a 173-amino-acid chain: Putative pre-16S rRNA nuclease (173 aa).

It belongs to the YqgF nuclease family.

The protein localises to the cytoplasm. In terms of biological role, could be a nuclease involved in processing of the 5'-end of pre-16S rRNA. This is Putative pre-16S rRNA nuclease from Rhodopirellula baltica (strain DSM 10527 / NCIMB 13988 / SH1).